Reading from the N-terminus, the 795-residue chain is Phenylalanine--tRNA ligase beta subunit (795 aa).

Residues 39-148 enclose the tRNA-binding domain; that stretch reads AGSFHGVVVG…ADAPIGTDIR (110 aa). A B5 domain is found at 401–476; it reads PKRATITLRR…RVYGYNNIPD (76 aa). Mg(2+) contacts are provided by Asp-454, Asp-460, Glu-463, and Glu-464. In terms of domain architecture, FDX-ACB spans 701 to 794; the sequence is SRFPANRRDI…LKERFQASLR (94 aa).

This sequence belongs to the phenylalanyl-tRNA synthetase beta subunit family. Type 1 subfamily. As to quaternary structure, tetramer of two alpha and two beta subunits. The cofactor is Mg(2+).

The protein localises to the cytoplasm. It catalyses the reaction tRNA(Phe) + L-phenylalanine + ATP = L-phenylalanyl-tRNA(Phe) + AMP + diphosphate + H(+). This Shigella sonnei (strain Ss046) protein is Phenylalanine--tRNA ligase beta subunit.